The chain runs to 504 residues: O-phosphoseryl-tRNA(Sec) selenium transferase (504 aa).

Residues 1-44 (MNPESFAAGERRVSPAYVRQGCEARRAHEHLIRLLLEQGKCPED) are tetramerization. Ser-14 carries the phosphoserine modification. Arg-75 provides a ligand contact to pyridoxal 5'-phosphate. A phosphate loop (P-loop) region spans residues 96 to 106 (GRSGDISAVQP). Arg-97, Ser-98, and Gln-105 together coordinate substrate. Residue Arg-271 coordinates tRNA. Lys-284 bears the N6-(pyridoxal phosphate)lysine mark. Arg-313 provides a ligand contact to substrate. TRNA-binding residues include Arg-398 and Lys-463.

The protein belongs to the SepSecS family. In terms of assembly, homotetramer formed by a catalytic dimer and a non-catalytic dimer serving as a binding platform that orients tRNASec for catalysis. Each tetramer binds the CCA ends of two tRNAs which point to the active sites of the catalytic dimer. It depends on pyridoxal 5'-phosphate as a cofactor.

It is found in the cytoplasm. The catalysed reaction is O-phospho-L-seryl-tRNA(Sec) + selenophosphate + H2O = L-selenocysteinyl-tRNA(Sec) + 2 phosphate. Its pathway is aminoacyl-tRNA biosynthesis; selenocysteinyl-tRNA(Sec) biosynthesis; selenocysteinyl-tRNA(Sec) from L-seryl-tRNA(Sec) (archaeal/eukaryal route): step 2/2. Its function is as follows. Converts O-phosphoseryl-tRNA(Sec) to selenocysteinyl-tRNA(Sec) required for selenoprotein biosynthesis. The chain is O-phosphoseryl-tRNA(Sec) selenium transferase (Sepsecs) from Mus musculus (Mouse).